The chain runs to 67 residues: MPVRFSKVLIPQPKSKFIKTRCPDCGNEQITFSHAAMVVRCLVCGRVLAIPTGGKAKLAGHVVKVLE.

Zn(2+) contacts are provided by cysteine 22, cysteine 25, cysteine 41, and cysteine 44. The segment at cysteine 22–cysteine 44 adopts a C4-type zinc-finger fold.

It belongs to the eukaryotic ribosomal protein eS27 family. As to quaternary structure, part of the 30S ribosomal subunit. Zn(2+) serves as cofactor.

This chain is Small ribosomal subunit protein eS27, found in Pyrobaculum aerophilum (strain ATCC 51768 / DSM 7523 / JCM 9630 / CIP 104966 / NBRC 100827 / IM2).